Reading from the N-terminus, the 238-residue chain is 3-dehydroquinate dehydratase (238 aa).

Residues 35-37 and R70 contribute to the 3-dehydroquinate site; that span reads ELR. The active-site Proton donor/acceptor is the H133. Residue K160 is the Schiff-base intermediate with substrate of the active site. Positions 202 and 225 each coordinate 3-dehydroquinate.

The protein belongs to the type-I 3-dehydroquinase family. Homodimer.

It carries out the reaction 3-dehydroquinate = 3-dehydroshikimate + H2O. It functions in the pathway metabolic intermediate biosynthesis; chorismate biosynthesis; chorismate from D-erythrose 4-phosphate and phosphoenolpyruvate: step 3/7. In terms of biological role, involved in the third step of the chorismate pathway, which leads to the biosynthesis of aromatic amino acids. Catalyzes the cis-dehydration of 3-dehydroquinate (DHQ) and introduces the first double bond of the aromatic ring to yield 3-dehydroshikimate. The protein is 3-dehydroquinate dehydratase of Staphylococcus aureus (strain MRSA252).